Here is a 288-residue protein sequence, read N- to C-terminus: Bis(5'-nucleosyl)-tetraphosphatase, symmetrical (288 aa).

Belongs to the Ap4A hydrolase family.

It catalyses the reaction P(1),P(4)-bis(5'-adenosyl) tetraphosphate + H2O = 2 ADP + 2 H(+). Its function is as follows. Hydrolyzes diadenosine 5',5'''-P1,P4-tetraphosphate to yield ADP. This Baumannia cicadellinicola subsp. Homalodisca coagulata protein is Bis(5'-nucleosyl)-tetraphosphatase, symmetrical.